The chain runs to 83 residues: MEKLIPLVHLNDRTSFLSSRLLDVLLKHNTLLHYYQSHLPFKLYFKEIYYITLNIILRSFLEFNHTYSVIISLLVSPDFLNTM.

This is an uncharacterized protein from Lactuca sativa (Garden lettuce).